The following is a 231-amino-acid chain: AA9 family lytic polysaccharide monooxygenase F (231 aa).

Positions 1-17 (MLPSISLLLAAALGTSA) are cleaved as a signal peptide. Cu(2+)-binding residues include H18, D50, and H89. D50 provides a ligand contact to O2. 2 disulfides stabilise this stretch: C59/C177 and C147/C231. O2-binding residues include H163 and Q172. Cu(2+) is bound at residue Y174.

This sequence belongs to the polysaccharide monooxygenase AA9 family. The cofactor is Cu(2+).

The protein resides in the secreted. It catalyses the reaction [(1-&gt;4)-beta-D-glucosyl]n+m + reduced acceptor + O2 = 4-dehydro-beta-D-glucosyl-[(1-&gt;4)-beta-D-glucosyl]n-1 + [(1-&gt;4)-beta-D-glucosyl]m + acceptor + H2O.. Lytic polysaccharide monooxygenase (LPMO) that depolymerizes crystalline and amorphous polysaccharides via the oxidation of scissile alpha- or beta-(1-4)-glycosidic bonds, yielding C1 oxidation products. Catalysis by LPMOs requires the reduction of the active-site copper from Cu(II) to Cu(I) by a reducing agent and H(2)O(2) or O(2) as a cosubstrate. This Neurospora crassa (strain ATCC 24698 / 74-OR23-1A / CBS 708.71 / DSM 1257 / FGSC 987) protein is AA9 family lytic polysaccharide monooxygenase F (gh61-6).